The following is an 82-amino-acid chain: Sodium channel neurotoxin MeuNaTxalpha-3 (82 aa).

A signal peptide spans 1 to 8 (LVMAGVES). Positions 10-80 (RDGHIARNNN…VPIKVPGDCH (71 aa)) constitute an LCN-type CS-alpha/beta domain. 4 disulfide bridges follow: cysteine 20–cysteine 79, cysteine 24–cysteine 52, cysteine 38–cysteine 62, and cysteine 42–cysteine 64.

Expressed by the venom gland.

Its subcellular location is the secreted. Alpha toxins bind voltage-independently at site-3 of sodium channels (Nav) and inhibit the inactivation of the activated channels, thereby blocking neuronal transmission. The polypeptide is Sodium channel neurotoxin MeuNaTxalpha-3 (Mesobuthus eupeus (Lesser Asian scorpion)).